The primary structure comprises 135 residues: Large ribosomal subunit protein uL16c (135 aa).

This sequence belongs to the universal ribosomal protein uL16 family. Part of the 50S ribosomal subunit.

Its subcellular location is the plastid. The protein resides in the chloroplast. The polypeptide is Large ribosomal subunit protein uL16c (Phaseolus vulgaris (Kidney bean)).